The chain runs to 237 residues: Probable transcriptional regulatory protein Exig_1693 (237 aa).

This sequence belongs to the TACO1 family. YeeN subfamily.

The protein localises to the cytoplasm. This chain is Probable transcriptional regulatory protein Exig_1693, found in Exiguobacterium sibiricum (strain DSM 17290 / CCUG 55495 / CIP 109462 / JCM 13490 / 255-15).